The chain runs to 1241 residues: eIF-2-alpha kinase GCN2 (1241 aa).

Positions 1-15 (MGRSSSKKKKKRGGS) are enriched in basic residues. The tract at residues 1–33 (MGRSSSKKKKKRGGSGRRGQLKDHGSNADEDNE) is disordered. Positions 37 to 148 (EEITALSAIF…EAAQEFLSEI (112 aa)) constitute an RWD domain. The tract at residues 253–321 (PIAKLNTVQE…SLGSWSSDSL (69 aa)) is disordered. Low complexity-rich tracts occupy residues 267 to 276 (DTSISSFDSS) and 307 to 321 (NSESESLGSWSSDSL). A Protein kinase domain is found at 425 to 731 (FEELKPLGQG…ATELLKHAFP (307 aa)). ATP contacts are provided by residues 431 to 439 (LGQGGFGHV) and lysine 454. The active-site Proton acceptor is aspartate 586. A histidyl-tRNA synthetase-like region spans residues 819–1219 (IPMRLLSDCP…ELKKEKVVGR (401 aa)).

Belongs to the protein kinase superfamily. Ser/Thr protein kinase family. GCN2 subfamily. In terms of assembly, homodimer; homodimerization is important for kinase activation by uncharged tRNAs. In terms of tissue distribution, expressed in roots, leaves, stems, buds, flowers, siliques and seedlings.

The protein resides in the cytoplasm. The catalysed reaction is L-seryl-[protein] + ATP = O-phospho-L-seryl-[protein] + ADP + H(+). The enzyme catalyses L-threonyl-[protein] + ATP = O-phospho-L-threonyl-[protein] + ADP + H(+). With respect to regulation, the kinase activity is stimulated upon binding to uncharged tRNAs. In terms of biological role, metabolic-stress sensing protein kinase that phosphorylates the alpha subunit of eukaryotic translation initiation factor 2 eIF-2-alpha in response to low amino acid availability. Plays a role as an activator of the general amino acid control pathway required for adapatation to amino acid starvation. Converts phosphorylated eIF-2-alpha either to a competitive inhibitor of translation initiation, leading to a global protein synthesis repression, and thus to a reduced overall utilization of amino acids, or to a translational initiation activation of specific mRNAs, and hence allowing reprogramming of amino acid biosynthetic gene expression to alleviate nutrient depletion. Binds uncharged tRNAs. This chain is eIF-2-alpha kinase GCN2, found in Arabidopsis thaliana (Mouse-ear cress).